A 357-amino-acid chain; its full sequence is MAINTDTSGKQKALTMVLNQIERSFGKGAIMRLGDATRMRVETISTGALTLDLALGGGLPKGRVIEIYGPESSGKTTVALHAIAEVQKEGGIAAFVDAEHALDPTYASALGVDIQNLLVSQPDTGESALEIVDQLVRSAAVDIVVIDSVAALVPRAEIEGDMGDAHVGLQARLMSQALRKITGNIGKSGCTVIFINQLRQKIGVTYGSPETTTGGNALKFYASVRLDIRRIQTLKKGTDEFGNRVKVKVAKNKVAPPFRIAEFDIIFGKGVSTLGCLVDLAEETGILIRKGAWYSYNGDNISQGRDNAIKYLEEKPEFSEQIKQQVREKLDKGAVVSANSVAKNNEDDEDEDVEEEE.

69–76 (GPESSGKT) contacts ATP. The segment at 337–357 (SANSVAKNNEDDEDEDVEEEE) is disordered. Acidic residues predominate over residues 346 to 357 (EDDEDEDVEEEE).

Belongs to the RecA family.

It is found in the cytoplasm. Can catalyze the hydrolysis of ATP in the presence of single-stranded DNA, the ATP-dependent uptake of single-stranded DNA by duplex DNA, and the ATP-dependent hybridization of homologous single-stranded DNAs. It interacts with LexA causing its activation and leading to its autocatalytic cleavage. The polypeptide is Protein RecA (Nostoc sp. (strain PCC 7120 / SAG 25.82 / UTEX 2576)).